Consider the following 162-residue polypeptide: F protein (162 aa).

Residues 1-23 (MSTNPKPQKKKTNVTPTVAHRTS) are disordered. Residues 13-23 (NVTPTVAHRTS) are compositionally biased toward polar residues.

The protein localises to the host cytoplasm. The protein resides in the host perinuclear region. This chain is F protein, found in Hepatitis C virus genotype 1a (isolate 1) (HCV).